Here is a 362-residue protein sequence, read N- to C-terminus: Anthranilate phosphoribosyltransferase 2 (362 aa).

Residues Gly103, 106–107 (GD), Thr111, 113–116 (NIST), 131–139 (KHGNRSASS), and Ser143 contribute to the 5-phospho-alpha-D-ribose 1-diphosphate site. Gly103 serves as a coordination point for anthranilate. Residue Ser115 participates in Mg(2+) binding. Residue Asn134 coordinates anthranilate. Arg189 lines the anthranilate pocket. Mg(2+) is bound by residues Asp248 and Glu249.

The protein belongs to the anthranilate phosphoribosyltransferase family. As to quaternary structure, homodimer. Mg(2+) is required as a cofactor.

The catalysed reaction is N-(5-phospho-beta-D-ribosyl)anthranilate + diphosphate = 5-phospho-alpha-D-ribose 1-diphosphate + anthranilate. The protein operates within amino-acid biosynthesis; L-tryptophan biosynthesis; L-tryptophan from chorismate: step 2/5. Catalyzes the transfer of the phosphoribosyl group of 5-phosphorylribose-1-pyrophosphate (PRPP) to anthranilate to yield N-(5'-phosphoribosyl)-anthranilate (PRA). The polypeptide is Anthranilate phosphoribosyltransferase 2 (Nostoc sp. (strain PCC 7120 / SAG 25.82 / UTEX 2576)).